Reading from the N-terminus, the 658-residue chain is Pentatricopeptide repeat-containing protein At1g69290 (658 aa).

Disordered regions lie at residues 1 to 23 and 39 to 61; these read MFRK…ESPS and TLSP…KSSF. Polar residues predominate over residues 50 to 61; that stretch reads PKTLTPDQKSSF. PPR repeat units lie at residues 214 to 249, 250 to 284, 285 to 320, 323 to 353, 361 to 395, 397 to 431, 432 to 466, 467 to 497, 503 to 537, 538 to 568, and 581 to 615; these read DLVA…GVKP, DELS…GFAS, RRIL…GEES, SVET…AQKL, DSSV…GGGS, GIGV…GLQL, DVEI…RVVD, LKGS…VVED, NSHD…RYEP, NNQT…IKGK, and DHAL…KIFV.

This sequence belongs to the PPR family. P subfamily.

In Arabidopsis thaliana (Mouse-ear cress), this protein is Pentatricopeptide repeat-containing protein At1g69290.